We begin with the raw amino-acid sequence, 198 residues long: tRNA (pseudouridine(54)-N(1))-methyltransferase (198 aa).

Residues L130, G153, 176-181 (LSPLEL), and C186 contribute to the S-adenosyl-L-methionine site.

It belongs to the methyltransferase superfamily. TrmY family. In terms of assembly, homodimer.

It is found in the cytoplasm. It catalyses the reaction pseudouridine(54) in tRNA + S-adenosyl-L-methionine = N(1)-methylpseudouridine(54) in tRNA + S-adenosyl-L-homocysteine + H(+). Specifically catalyzes the N1-methylation of pseudouridine at position 54 (Psi54) in tRNAs. In Methanococcus maripaludis (strain C5 / ATCC BAA-1333), this protein is tRNA (pseudouridine(54)-N(1))-methyltransferase.